A 436-amino-acid polypeptide reads, in one-letter code: EPS I polysaccharide export inner membrane protein EpsE (436 aa).

Helical transmembrane passes span 20-40 (VLGL…NILL), 49-69 (FGLF…LATG), 91-111 (LCAF…ALYL), 133-153 (AAIV…QYAM), 160-180 (ATIS…MGPI), 185-205 (LALT…LLVL), 234-254 (VLTT…LAAM), 261-281 (LALF…PATL), 307-327 (ALLF…LLAG), 341-361 (AASS…SVLL), 375-395 (FAMA…ALRL), and 396-416 (GFGA…LILF).

The protein to E.coli bicyclomycin resistance protein (BCR).

It localises to the cell inner membrane. Functionally, probably involved in polymerization and/or export of exopolysaccharide EPS I which functions as a virulence factor. May play a role in export of EPS I or its intermediates across the membranes. In Ralstonia solanacearum (Pseudomonas solanacearum), this protein is EPS I polysaccharide export inner membrane protein EpsE (epsE).